We begin with the raw amino-acid sequence, 378 residues long: Alkanesulfonate monooxygenase (378 aa).

Belongs to the SsuD family.

The enzyme catalyses an alkanesulfonate + FMNH2 + O2 = an aldehyde + FMN + sulfite + H2O + 2 H(+). Functionally, catalyzes the desulfonation of aliphatic sulfonates. This Bacillus velezensis (strain DSM 23117 / BGSC 10A6 / LMG 26770 / FZB42) (Bacillus amyloliquefaciens subsp. plantarum) protein is Alkanesulfonate monooxygenase.